The sequence spans 492 residues: JmjC domain-containing histone demethylation protein 1 (492 aa).

The PHD-type; atypical zinc-finger motif lies at 4–72 (PNICQHCQLK…SYRCPNHKEG (69 aa)). The region spanning 254 to 409 (TAVRQNDLVD…THLKIVEIEK (156 aa)) is the JmjC domain. Thr302 contributes to the substrate binding site. Fe cation-binding residues include His305 and Asp307. A substrate-binding site is contributed by Lys322. His377 is a Fe cation binding site.

Belongs to the JHDM1 histone demethylase family. Requires Fe(2+) as cofactor.

Its subcellular location is the nucleus. The enzyme catalyses N(6),N(6)-dimethyl-L-lysyl(36)-[histone H3] + 2 2-oxoglutarate + 2 O2 = L-lysyl(36)-[histone H3] + 2 formaldehyde + 2 succinate + 2 CO2. Histone demethylase that specifically demethylates 'Lys-36' of histone H3, thereby playing a central role in histone code. Does not demethylate H3 'Lys-4' nor 'Lys-79'. The polypeptide is JmjC domain-containing histone demethylation protein 1 (JHD1) (Saccharomyces cerevisiae (strain ATCC 204508 / S288c) (Baker's yeast)).